The following is a 350-amino-acid chain: Induced myeloid leukemia cell differentiation protein Mcl-1 (350 aa).

Glycyl lysine isopeptide (Lys-Gly) (interchain with G-Cter in ubiquitin) cross-links involve residues lysine 5 and lysine 40. The segment at 47–87 is disordered; it reads EIGGGEAGAVIGGSAGASPPSTLTPDSRRVARPPPIGAEVP. Residues 50-61 are compositionally biased toward gly residues; it reads GGEAGAVIGGSA. Residues 104–175 form a PEST-like region; the sequence is RAAPLEEMEA…PAEEEEDELY (72 aa). At serine 121 the chain carries Phosphoserine. Lysine 136 is covalently cross-linked (Glycyl lysine isopeptide (Lys-Gly) (interchain with G-Cter in ubiquitin)). The disordered stretch occupies residues 148–171; sequence GESGNNTSTDGSLPSTPPPAEEEE. Residues 150–161 are compositionally biased toward polar residues; it reads SGNNTSTDGSLP. A Phosphoserine; by GSK3-alpha and GSK3-beta modification is found at serine 159. The residue at position 162 (serine 162) is a Phosphoserine. Threonine 163 carries the post-translational modification Phosphothreonine; by MAPK. Glycyl lysine isopeptide (Lys-Gly) (interchain with G-Cter in ubiquitin) cross-links involve residues lysine 194 and lysine 197. The BH3 motif lies at 209-223; that stretch reads ALETLRRVGDGVQRN. The BH1 motif lies at 252 to 272; that stretch reads HVFSDGVTNWGRIVTLISFGA. The BH2 motif lies at 304–319; that stretch reads DWLVKQRGWDGFVEFF. Residues 328–348 form a helical membrane-spanning segment; sequence IRNVLLAFAGVAGVGAGLAYL.

Belongs to the Bcl-2 family. In terms of assembly, interacts with HIF3A (via C-terminus domain). Interacts with BAD, BOK, BIK and BMF. Interacts with PMAIP1. Interacts with BBC3. Isoform 1 interacts with BAX, BAK1 and TPT1. Heterodimer of isoform 1 and isoform 2. Homodimers of isoform 1 or isoform 2 are not detected. Isoform 2 does not interact with pro-apoptotic BCL2-related proteins. Interacts with RTL10/BOP. Interacts with BCL2L11; may sequester BCL2L11 to prevent its pro-apoptotic activity. Interacts with GIMAP5 and HSPA8/HSC70; the interaction between HSPA8 and MCL1 is impaired in the absence of GIMAP5. Cleaved by CASP3 during apoptosis. In intact cells cleavage occurs preferentially after Asp-127, yielding a pro-apoptotic 28 kDa C-terminal fragment. Post-translationally, rapidly degraded in the absence of phosphorylation on Thr-163 in the PEST region. In terms of processing, phosphorylated on Ser-159, by GSK3, in response to IL3/interleukin-3 withdrawal. Phosphorylation at Ser-159 induces ubiquitination and proteasomal degradation, abrogating the anti-apoptotic activity. Treatment with taxol or okadaic acid induces phosphorylation on additional sites. Ubiquitinated. Ubiquitination is induced by phosphorylation at Ser-159. Deubiquitinated by USP20; leading to increased stability.

The protein localises to the membrane. It localises to the cytoplasm. It is found in the mitochondrion. The protein resides in the nucleus. Its subcellular location is the nucleoplasm. Involved in the regulation of apoptosis versus cell survival, and in the maintenance of viability but not of proliferation. Mediates its effects by interactions with a number of other regulators of apoptosis. Isoform 1 inhibits apoptosis. Isoform 2 promotes apoptosis. The chain is Induced myeloid leukemia cell differentiation protein Mcl-1 (MCL1) from Homo sapiens (Human).